Reading from the N-terminus, the 115-residue chain is MSDLDIQIPTAFDPFAEANAGDSGAAAGSKDYVHVRIQQRNGRKSLTTVQGLKKEFSYNKILKDLKKEFCCNGTVVQDPELGQVIQLQGDQRKNVSNFLVQAGIVKKEHIKIHGF.

The protein belongs to the SUI1 family. In terms of tissue distribution, expressed in all tissues examined.

In terms of biological role, probably involved in translation. The sequence is that of Protein translation factor SUI1 homolog (GOS2) from Oryza sativa subsp. indica (Rice).